The following is a 1149-amino-acid chain: Protein deacetylase HDAC6 (1149 aa).

The segment at 1–61 is disordered; it reads MTSTGQDSST…KGKMKKLSQP (61 aa). Residues 18–29 show a composition bias toward polar residues; sequence NPQSPLQESSAT. At Ser21 the chain carries Phosphoserine. Residue Arg32 is modified to Omega-N-methylarginine. Ser43 carries the post-translational modification Phosphoserine. Positions 66 to 75 match the Nuclear export signal motif; the sequence is LVVGLQGLDL. Histone deacetylase regions lie at residues 87–403 and 481–799; these read LVFD…TLLG and GLVY…SLLG. The active-site 1 is the His215. The active-site 2 is His610. Residues 954–975 are disordered; the sequence is ALGETEPTPPASHTNKQTTGAS. Phosphothreonine is present on residues Thr958, Thr961, Thr967, and Thr971. A compositionally biased stretch (polar residues) spans 964–975; sequence ASHTNKQTTGAS. Ser975 is subject to Phosphoserine. The UBP-type zinc finger occupies 1045–1143; it reads SWCPHLMAVC…NAAHQNKFGE (99 aa). Zn(2+)-binding residues include Cys1047, His1049, Cys1067, Cys1070, Cys1079, Cys1082, and Cys1087. The tract at residues 1088-1090 is ubiquitin binding; that stretch reads SRY. Zn(2+) contacts are provided by His1094, His1098, His1104, Cys1117, and Cys1120. The segment at 1116-1123 is ubiquitin binding; sequence WCYVCQAY. Ser1148 carries the phosphoserine modification.

Belongs to the histone deacetylase family. HD type 2 subfamily. As to quaternary structure, forms a trimeric complex in the nucleus consisting of BANP, HDAC6 and KHDRBS1/SAM68; HDAC6 keeps KHDRBS1 in a deacetylated state which inhibits the inclusion of CD44 alternate exons. The complex is disrupted by MAPK1/MAPK3-mediated phosphorylation of BANP which results in BANP export to the cytoplasm. This facilitates acetylation of KHDRBS1 and CD44 variant exon inclusion. Interacts with SIRT2 (via both phosphorylated, unphosphorylated, active or inactive forms); the interaction is necessary for the complex to interact with alpha-tubulin. Under proteasome impairment conditions, interacts with UBD via its histone deacetylase 1 and UBP-type zinc-finger regions. Interacts with BBIP1, CBFA2T3, CYLD, DDIT3/CHOP, ZMYND15, F-actin and HDAC11. Interacts with RIPOR2; this interaction occurs during early myogenic differentiation and prevents HDAC6 to deacetylate tubulin. Interacts with AURKA; AURKA-mediated phosphorylation of HDAC6 promotes deacetylation of alpha-tubulin. Interacts with DYSF; this interaction occurs during early myogenic differentiation. Interacts with TPPP; inhibiting the tubulin deacetylase activity of HDAC6. Interacts with DYNLL1. Interacts with ATP13A2; the interaction results in recruitment of HDAC6 to lysosomes to promote CTTN deacetylation. Interacts with CCDC141 (via the N-terminal region); inhibiting the deacetylase activity of HDAC6. Interacts with IPO7; the interaction facilitates HDAC6 nuclear translocation in dental papilla cells. Zn(2+) is required as a cofactor. Phosphorylated by AURKA; phosphorylation increases HDAC6-mediated deacetylation of alpha-tubulin and subsequent disassembly of cilia. Post-translationally, ubiquitinated. Its polyubiquitination however does not lead to its degradation. In terms of processing, sumoylated in vitro. As to expression, expressed in neurons of the cortex. Expressed in Purkinje cells. Detected in keratinocytes (at protein level).

The protein resides in the cytoplasm. The protein localises to the cytoskeleton. It is found in the nucleus. Its subcellular location is the perikaryon. It localises to the cell projection. The protein resides in the dendrite. The protein localises to the axon. It is found in the cilium. Its subcellular location is the microtubule organizing center. It localises to the centrosome. The protein resides in the cilium basal body. The enzyme catalyses N(6)-acetyl-L-lysyl-[protein] + H2O = L-lysyl-[protein] + acetate. The catalysed reaction is N(6)-acetyl-L-lysyl-[alpha-tubulin] + H2O = L-lysyl-[alpha-tubulin] + acetate. Its pathway is protein modification; protein ubiquitination. Deacetylates a wide range of non-histone substrates. Plays a central role in microtubule-dependent cell motility by mediating deacetylation of tubulin. Required for cilia disassembly via deacetylation of alpha-tubulin. Alpha-tubulin deacetylation results in destabilization of dynamic microtubules. Promotes deacetylation of CTTN, leading to actin polymerization, promotion of autophagosome-lysosome fusion and completion of autophagy. Deacetylates SQSTM1. Deacetylates peroxiredoxins PRDX1 and PRDX2, decreasing their reducing activity. Deacetylates antiviral protein RIGI in the presence of viral mRNAs which is required for viral RNA detection by RIGI. Sequentially deacetylates and polyubiquitinates DNA mismatch repair protein MSH2 which leads to MSH2 degradation, reducing cellular sensitivity to DNA-damaging agents and decreasing cellular DNA mismatch repair activities. Deacetylates DNA mismatch repair protein MLH1 which prevents recruitment of the MutL alpha complex (formed by the MLH1-PMS2 heterodimer) to the MutS alpha complex (formed by the MSH2-MSH6 heterodimer), leading to tolerance of DNA damage. Deacetylates RHOT1/MIRO1 which blocks mitochondrial transport and mediates axon growth inhibition. Deacetylates transcription factor SP1 which leads to increased expression of ENG, positively regulating angiogenesis. Deacetylates KHDRBS1/SAM68 which regulates alternative splicing by inhibiting the inclusion of CD44 alternate exons. Promotes odontoblast differentiation following IPO7-mediated nuclear import and subsequent repression of RUNX2 expression. In addition to its protein deacetylase activity, plays a key role in the degradation of misfolded proteins: when misfolded proteins are too abundant to be degraded by the chaperone refolding system and the ubiquitin-proteasome, mediates the transport of misfolded proteins to a cytoplasmic juxtanuclear structure called aggresome. Probably acts as an adapter that recognizes polyubiquitinated misfolded proteins and target them to the aggresome, facilitating their clearance by autophagy. The chain is Protein deacetylase HDAC6 from Mus musculus (Mouse).